Consider the following 803-residue polypeptide: Protein translocase subunit SecA (803 aa).

ATP contacts are provided by residues Q100, 118 to 122 (GEGKT), and D508.

Belongs to the SecA family. Monomer and homodimer. Part of the essential Sec protein translocation apparatus which comprises SecA, SecYEG and auxiliary proteins SecDF. Other proteins may also be involved.

The protein resides in the cell membrane. The protein localises to the cytoplasm. The enzyme catalyses ATP + H2O + cellular proteinSide 1 = ADP + phosphate + cellular proteinSide 2.. In terms of biological role, part of the Sec protein translocase complex. Interacts with the SecYEG preprotein conducting channel. Has a central role in coupling the hydrolysis of ATP to the transfer of proteins into and across the cell membrane, serving as an ATP-driven molecular motor driving the stepwise translocation of polypeptide chains across the membrane. This chain is Protein translocase subunit SecA, found in Leuconostoc mesenteroides subsp. mesenteroides (strain ATCC 8293 / DSM 20343 / BCRC 11652 / CCM 1803 / JCM 6124 / NCDO 523 / NBRC 100496 / NCIMB 8023 / NCTC 12954 / NRRL B-1118 / 37Y).